Here is a 478-residue protein sequence, read N- to C-terminus: Ubiquitin carboxyl-terminal hydrolase calypso (478 aa).

In terms of domain architecture, UCH catalytic spans 11–239 (GWLELESDPG…IRFNLMAVVP (229 aa)). The Nucleophile role is filled by cysteine 97. Residue histidine 176 is the Proton donor of the active site. The 29-residue stretch at 400–428 (NYDEFICTFLSMLAHQGELGDLVSQHLIT) folds into the ULD domain. The interval 430-478 (RKPNMGSVQNSGSRGVVRNYNKKTTTNGSSPKTPSSKRRRGRTKYRKRK) is positively charged C-terminal tail required for binding nucleosomes. Residues 432–442 (PNMGSVQNSGS) are compositionally biased toward polar residues. The disordered stretch occupies residues 432–478 (PNMGSVQNSGSRGVVRNYNKKTTTNGSSPKTPSSKRRRGRTKYRKRK). Basic residues predominate over residues 464–478 (SSKRRRGRTKYRKRK).

It belongs to the peptidase C12 family. BAP1 subfamily. Catalytic component of the polycomb repressive deubiquitinase (PR-DUB) complex, at least composed of caly/calypso, Asx and sba (MBD5/6 homolog). The PR-DUB complex associates with nucleosomes to mediate deubiquitination of histone H2AK118ub1 substrates; the association requires the positively charged C-terminal tail of caly, probably due to direct binding of DNA. Interacts (via ULD domain) with Asx (via DEUBAD domain); the interaction produces a stable heterodimer with a composite binding site for ubiquitin. Homodimerizes (via coiled-coil hinge-region between the UCH and ULD domains) to mediate assembly of 2 copies of the caly-Asx heterodimer into a bisymmetric tetramer; dimerization enhances PR-DUB association with nucleosomes.

It is found in the nucleus. It carries out the reaction Thiol-dependent hydrolysis of ester, thioester, amide, peptide and isopeptide bonds formed by the C-terminal Gly of ubiquitin (a 76-residue protein attached to proteins as an intracellular targeting signal).. Its function is as follows. Catalytic component of the polycomb repressive deubiquitinase (PR-DUB) complex, a complex that specifically mediates deubiquitination of histone H2A monoubiquitinated at 'Lys-119' (H2AK118ub1). Mediates bisymmetric organization of the PR-DUB complex and is involved in association with nucleosomes to mediate deubiquitination. Does not deubiquitinate monoubiquitinated histone H2B. Required to maintain the transcriptionally repressive state of homeotic genes throughout development. The PR-DUB complex has weak or no activity toward 'Lys-48'- and 'Lys-63'-linked polyubiquitin chains. Polycomb group (PcG) protein. This Aedes aegypti (Yellowfever mosquito) protein is Ubiquitin carboxyl-terminal hydrolase calypso.